A 1195-amino-acid chain; its full sequence is EST/SMG-like protein 2 (1195 aa).

Polar residues-rich tracts occupy residues 1–10 (MPETSVQNPL), 18–35 (TRSM…SATP), and 55–68 (VLNP…SNSV). Disordered stretches follow at residues 1 to 38 (MPET…PSFP), 55 to 130 (VLNP…VGIT), 179 to 268 (SKSE…PASN), and 610 to 643 (DKKE…DEIM). 2 stretches are compositionally biased toward basic and acidic residues: residues 83-109 (RFSD…EKNP) and 197-208 (INDKDNSARDQD). 2 stretches are compositionally biased toward low complexity: residues 210 to 252 (NNSG…NNSD) and 619 to 629 (NNDSSVTESST). The 140-residue stretch at 1025-1164 (TYFVFDATSW…LISDDDAMKK (140 aa)) folds into the PINc domain.

Transiently interacts with PEX14.

The protein localises to the cytoplasm. Its subcellular location is the nucleus. It is found in the peroxisome. May be involved in the regulation of gene expression responses of environment-sensing pathways. This chain is EST/SMG-like protein 2, found in Saccharomyces cerevisiae (strain ATCC 204508 / S288c) (Baker's yeast).